The primary structure comprises 402 residues: CCA-adding enzyme (402 aa).

The ATP site is built by Gly-32 and Arg-35. Residues Gly-32 and Arg-35 each contribute to the CTP site. Residues Asp-45 and Asp-47 each coordinate Mg(2+). ATP-binding residues include Arg-116, Asp-159, Arg-162, Arg-165, and Arg-168. Residues Arg-116, Asp-159, Arg-162, Arg-165, and Arg-168 each coordinate CTP.

It belongs to the tRNA nucleotidyltransferase/poly(A) polymerase family. Bacterial CCA-adding enzyme type 3 subfamily. In terms of assembly, homodimer. Mg(2+) is required as a cofactor.

It carries out the reaction a tRNA precursor + 2 CTP + ATP = a tRNA with a 3' CCA end + 3 diphosphate. The catalysed reaction is a tRNA with a 3' CCA end + 2 CTP + ATP = a tRNA with a 3' CCACCA end + 3 diphosphate. Functionally, catalyzes the addition and repair of the essential 3'-terminal CCA sequence in tRNAs without using a nucleic acid template. Adds these three nucleotides in the order of C, C, and A to the tRNA nucleotide-73, using CTP and ATP as substrates and producing inorganic pyrophosphate. tRNA 3'-terminal CCA addition is required both for tRNA processing and repair. Also involved in tRNA surveillance by mediating tandem CCA addition to generate a CCACCA at the 3' terminus of unstable tRNAs. While stable tRNAs receive only 3'-terminal CCA, unstable tRNAs are marked with CCACCA and rapidly degraded. This Streptococcus agalactiae serotype III (strain NEM316) protein is CCA-adding enzyme.